Reading from the N-terminus, the 95-residue chain is Homeotic protein bicoid (95 aa).

2 disordered regions span residues asparagine 1–methionine 29 and glycine 42–aspartate 63.

This sequence belongs to the paired homeobox family. Bicoid subfamily.

The protein localises to the nucleus. Bicoid is polarity protein that provides positional cues for the development of head and thoracic segments. BCD regulates the expression of zygotic genes, possibly through its homeodomain, and inhibits the activity of other maternal gene products. The sequence is that of Homeotic protein bicoid (bcd) from Drosophila subobscura (Fruit fly).